A 116-amino-acid chain; its full sequence is Small ribosomal subunit protein eS24 (116 aa).

The interval 81-116 (IEPEHMVERHKKVLEELESESEESEESESEESEEEE) is disordered. Residues 96–116 (ELESESEESEESESEESEEEE) show a composition bias toward acidic residues.

The protein belongs to the eukaryotic ribosomal protein eS24 family.

The chain is Small ribosomal subunit protein eS24 from Methanopyrus kandleri (strain AV19 / DSM 6324 / JCM 9639 / NBRC 100938).